The chain runs to 295 residues: Origin of replication complex subunit 6 (295 aa).

The disordered stretch occupies residues 212 to 295 (PSKRKHDDDS…MALEVSSAAN (84 aa)). Over residues 220–236 (DSDSSGESSGDDQDELD) the composition is skewed to acidic residues. The span at 254–263 (WKSSVLSNKQ) shows a compositional bias: polar residues.

It belongs to the ORC6 family. As to quaternary structure, component of the origin recognition complex (ORC) composed of at least ORC1, ORC2, ORC3, ORC4, ORC5 and ORC6. ORC is regulated in a cell-cycle and development dependent manner. It is sequentially assembled at the exit from anaphase of mitosis and disassembled as cells enter S phase.

It is found in the nucleus. Component of the origin recognition complex (ORC) that binds origins of replication. DNA-binding is ATP-dependent. The specific DNA sequences that define origins of replication have not been identified yet. ORC is required to assemble the pre-replication complex necessary to initiate DNA replication. The sequence is that of Origin of replication complex subunit 6 from Oryza sativa subsp. japonica (Rice).